A 192-amino-acid polypeptide reads, in one-letter code: Cysteine and glycine-rich protein 1 (192 aa).

The LIM zinc-binding 1 domain maps to 10 to 61 (CGVCQKAVYFAEEVQCEGSSFHKSCFLCMVCKKNLDSTTVAVHGDEIYCKSC). The short motif at 64–69 (KKYGPK) is the Nuclear localization signal element. One can recognise an LIM zinc-binding 2 domain in the interval 118 to 169 (CPRCGQAVYAAEKVIGAGKSWHKSCFRCAKCGKSLESTTLADKDGEIYCKGC).

In terms of assembly, probable monomer. Interacts with ZYX. As to expression, most prominent in tissues that are enriched in smooth muscle cells, such as gizzard, stomach, and intestine. Lower level in the heart, no expression in liver, skeletal muscle, or brain.

The protein resides in the nucleus. It is found in the cytoplasm. Its subcellular location is the cytoskeleton. Functionally, heat stable protein, that interacts with zyxin/ZYX. May be a component of a signal transduction pathway that mediates adhesion-stimulated changes in gene expression. In Gallus gallus (Chicken), this protein is Cysteine and glycine-rich protein 1 (CSRP1).